The chain runs to 422 residues: MTQFWPAPAASGAVRATVPVPGSKSITNRALVLAALAEGPSTLRGPLRSRDTELMATALRALGADLQDGPEGSWQVAPGPLRGPAEVDCGLAGTVMRFLPPVAALAEGRITFDGDPRARERPLDAVLNALRALGADISGDSLPFELQGTGKLAGGAVTIDASASSQFVSGLLLSAPRFEQGVTVTHTGEPVPSLPHIDMTVSMLRAAGVEVDDSKRDVWHVAPGPIRALDLDVEPDLSNATPFLAAAAVTGGTVTVPGWPERTDQAGDAIRDILARMGATVELGPDGLTVTGPAELAPLDIDLHDVGELTPTVAALAAFASGRSRLRGVAHLRGHETDRLAALQRELSGLGGDVEQTDDGLLIEPRPLTGGNWHSYADHRMATAGAILGLLVPGVLVEDIATTRKTIPDFPGMWSSMLGAVD.

3-phosphoshikimate-binding residues include Lys24, Ser25, and Arg29. Lys24 is a binding site for phosphoenolpyruvate. Residues Gly93 and Arg121 each contribute to the phosphoenolpyruvate site. Positions 164, 165, 166, 308, and 335 each coordinate 3-phosphoshikimate. Gln166 contacts phosphoenolpyruvate. The Proton acceptor role is filled by Glu308. Phosphoenolpyruvate contacts are provided by Arg339, Arg380, and Lys405.

Belongs to the EPSP synthase family. As to quaternary structure, monomer.

Its subcellular location is the cytoplasm. It catalyses the reaction 3-phosphoshikimate + phosphoenolpyruvate = 5-O-(1-carboxyvinyl)-3-phosphoshikimate + phosphate. The protein operates within metabolic intermediate biosynthesis; chorismate biosynthesis; chorismate from D-erythrose 4-phosphate and phosphoenolpyruvate: step 6/7. Functionally, catalyzes the transfer of the enolpyruvyl moiety of phosphoenolpyruvate (PEP) to the 5-hydroxyl of shikimate-3-phosphate (S3P) to produce enolpyruvyl shikimate-3-phosphate and inorganic phosphate. This is 3-phosphoshikimate 1-carboxyvinyltransferase from Saccharopolyspora erythraea (strain ATCC 11635 / DSM 40517 / JCM 4748 / NBRC 13426 / NCIMB 8594 / NRRL 2338).